A 366-amino-acid chain; its full sequence is MTPEHLPTEQYEAQLAEKVVRLQSMMAPFSNLVPEVFRSPVSHYRMRAEFRIWHDGDDLYHIIFDQQTKSRIRVDSFPAASELINQLMTAMIAGVRNNPFLRHKLFQIDYLTTLSNQAVVSLLYHKKLDDEWRQEAEALRDALRAQNLNVHLIGRATKTKIELDQDYIDERLPVAGKEMIYRQVENSFTQPNAAMNIQMLEWALDVTKGSKGDLLELYCGNGNFSLALARNFDRVLATEIAKPSVAAAQYNIAANHIDNVQIIRMAAEEFTQAMNGVREFNRLQGIDLKSYQCETIFVDPPRSGLDSETEKMVQAYPRILYISCNPETLCKNLETLSQTHKVERLALFDQFPYTHHMECGVLLTAK.

5 residues coordinate S-adenosyl-L-methionine: Gln190, Tyr218, Asn223, Glu239, and Asp299. The Nucleophile role is filled by Cys324. Glu358 functions as the Proton acceptor in the catalytic mechanism.

Belongs to the class I-like SAM-binding methyltransferase superfamily. RNA M5U methyltransferase family. TrmA subfamily.

The catalysed reaction is uridine(54) in tRNA + S-adenosyl-L-methionine = 5-methyluridine(54) in tRNA + S-adenosyl-L-homocysteine + H(+). The enzyme catalyses uridine(341) in tmRNA + S-adenosyl-L-methionine = 5-methyluridine(341) in tmRNA + S-adenosyl-L-homocysteine + H(+). Dual-specificity methyltransferase that catalyzes the formation of 5-methyluridine at position 54 (m5U54) in all tRNAs, and that of position 341 (m5U341) in tmRNA (transfer-mRNA). In Escherichia coli O81 (strain ED1a), this protein is tRNA/tmRNA (uracil-C(5))-methyltransferase.